The following is a 423-amino-acid chain: Gamma-glutamyl phosphate reductase (423 aa).

This sequence belongs to the gamma-glutamyl phosphate reductase family.

The protein localises to the cytoplasm. It catalyses the reaction L-glutamate 5-semialdehyde + phosphate + NADP(+) = L-glutamyl 5-phosphate + NADPH + H(+). Its pathway is amino-acid biosynthesis; L-proline biosynthesis; L-glutamate 5-semialdehyde from L-glutamate: step 2/2. In terms of biological role, catalyzes the NADPH-dependent reduction of L-glutamate 5-phosphate into L-glutamate 5-semialdehyde and phosphate. The product spontaneously undergoes cyclization to form 1-pyrroline-5-carboxylate. The sequence is that of Gamma-glutamyl phosphate reductase from Burkholderia ambifaria (strain ATCC BAA-244 / DSM 16087 / CCUG 44356 / LMG 19182 / AMMD) (Burkholderia cepacia (strain AMMD)).